The following is a 509-amino-acid chain: MSSHIQIFDTTLRDGEQTPGVNFTFDERLRIALQLEKWGVDVIEAGFPASSTGSFKSVQAIAQTLTTTAVCGLARCKKSDIDAVYEATKDAAKPVVHVFIATSPIHLEHKLKMSQEDVLASIKEHVTYAKQLFDVVQFSPEDATRTELPFLVKCVQTAVDAGATVINIPDTVGYSYHDEYAHIFKTLTESVTSSNEIIYSAHCHDDLGMAVSNSLAAIEGGARRIEGTVNGIGERAGNAALEEVALALYVRNDHYGAQTALNLEETKKTSDLISRYAGIRVPRNKAIVGQNAFSHESGIHQDGVLKHRETYEIMTPQLVGVSTTELPLGKLSGKHAFSEKLKALGYGIDKEAQIDLFKQFKAIADKKKSVSDRDIHAIIQGSEHEHQALYKLETLQLQYVSSGLQSAVVVVKDKEGHIYQDSSIGTGSIVAIYNAVDRIFQKETELIDYRINSVTEGTDAQAEVHVNLLIEGKTVNGFGIDHDILQASCKAYVEAHAKFAAENVEKVGN.

The region spanning 5–267 (IQIFDTTLRD…QTALNLEETK (263 aa)) is the Pyruvate carboxyltransferase domain. Mn(2+) contacts are provided by Asp-14, His-202, His-204, and Asn-238. Residues 391-509 (KLETLQLQYV…AAENVEKVGN (119 aa)) form a regulatory domain region.

This sequence belongs to the alpha-IPM synthase/homocitrate synthase family. LeuA type 1 subfamily. As to quaternary structure, homodimer. The cofactor is Mn(2+).

It localises to the cytoplasm. The catalysed reaction is 3-methyl-2-oxobutanoate + acetyl-CoA + H2O = (2S)-2-isopropylmalate + CoA + H(+). It functions in the pathway amino-acid biosynthesis; L-leucine biosynthesis; L-leucine from 3-methyl-2-oxobutanoate: step 1/4. Catalyzes the condensation of the acetyl group of acetyl-CoA with 3-methyl-2-oxobutanoate (2-ketoisovalerate) to form 3-carboxy-3-hydroxy-4-methylpentanoate (2-isopropylmalate). This chain is 2-isopropylmalate synthase, found in Staphylococcus aureus (strain MW2).